The primary structure comprises 651 residues: MRDSPGSKSSSERWHDTMAVSDPTAEGKDESSAKTSGFWALTLGSVGVVFGDIGTSPLYAFREAVDHAAQEGAVTPAIVLGVLSLILWSLFIVVTAKYVLLLLRADNNGEGGTLSLMALGQRALGRRSLLLLALGVVGASMFIGDSMITPAISVLSAVEGLKLAAPRLQDYVVPLTLVILVMLFAVQSRGTARVASAFAPVMALWFLTIAVLGVLHIHEDPHVLLAVNPWYAIHFLLNHGLLGLVIMGLVFLSVTGGEALYADLGHFGRKPIQVAWFCLVLPSLLLNYFGQGALILAHPEAIENTFYRLAPAPLILPLVILATAATVIASQAVITGAYSLIRQGVQLGLLPRFEVRYTSETHAGQIYLPRVNLLLLIGVLLLVLLFRTSSGLASAYGIAVSTTMVADGIMGFVVVWKLWNWHPAAAAALVVPLVVVDMMFFSANLLKLFDGAWVPLLFGIAMVVLIWTWRRGVAILIKKTRRTEVPLLDLIQSLEKRPPHIVKGTAVFLTSDPNFVPTALLHNLKHNKVLHEHNVILTIETAQTPRVGPAERVRMENISEKFSTVSLRFGFMESPNVPKALAIARKLGWQFDIMSTSFFVSRRSLKASAQSGMPAWQDKLFIALSRSANDAIDYFQIPTGRVVEVGTQVII.

The span at Met-1–Asp-16 shows a compositional bias: basic and acidic residues. Residues Met-1–Ser-31 are disordered. Transmembrane regions (helical) follow at residues Phe-38–Leu-58, Val-74–Val-94, Leu-129–Thr-149, Leu-168–Ser-188, Ala-197–Ile-217, Ala-232–Leu-252, Trp-276–Leu-296, Leu-309–Ala-329, Ile-366–Phe-386, Tyr-396–Trp-416, Pro-423–Ala-443, and Leu-448–Thr-468.

The protein belongs to the HAK/KUP transporter (TC 2.A.72) family.

The protein localises to the cell inner membrane. The catalysed reaction is K(+)(in) + H(+)(in) = K(+)(out) + H(+)(out). Transport of potassium into the cell. Likely operates as a K(+):H(+) symporter. This chain is Probable potassium transport system protein Kup, found in Nitrobacter winogradskyi (strain ATCC 25391 / DSM 10237 / CIP 104748 / NCIMB 11846 / Nb-255).